We begin with the raw amino-acid sequence, 242 residues long: uncharacterized protein (242 aa).

Over residues 1–11 (MNFEAASAPSQ) the composition is skewed to low complexity. Residues 1–45 (MNFEAASAPSQQPSPTPAPKTEEPKENGGSEQQADQPENSKKDDV) form a disordered region.

To U.parvum UU171.

This is an uncharacterized protein from Ureaplasma parvum serovar 3 (strain ATCC 700970).